We begin with the raw amino-acid sequence, 136 residues long: Active regulator of SIRT1 (136 aa).

The residue at position 7 (Arg7) is a Citrulline. The tract at residues 13 to 58 (LAASEAPRDPPGQAKPRGAPVKRPRKTKAIQAQKLRNSAKGKVPKS) is disordered. A Phosphoserine modification is found at Ser84.

It belongs to the AROS family. Part of the small subunit (SSU) processome, composed of more than 70 proteins and the RNA chaperone small nucleolar RNA (snoRNA) U3. Interacts with RPS19; the interaction is direct and mediates the integration of RPS19 in state post-A1. Interacts with SIRT1. Post-translationally, citrullinated by PADI4. As to expression, widely expressed (at protein level).

The protein localises to the nucleus. The protein resides in the nucleolus. In terms of biological role, part of the small subunit (SSU) processome, first precursor of the small eukaryotic ribosomal subunit. During the assembly of the SSU processome in the nucleolus, many ribosome biogenesis factors, an RNA chaperone and ribosomal proteins associate with the nascent pre-rRNA and work in concert to generate RNA folding, modifications, rearrangements and cleavage as well as targeted degradation of pre-ribosomal RNA by the RNA exosome. Acts as a chaperone that specifically mediates the integration of RPS19 in state post-A1. Direct regulator of SIRT1. Enhances SIRT1-mediated deacetylation of p53/TP53, thereby participating in inhibition of p53/TP53-mediated transcriptional activity. The sequence is that of Active regulator of SIRT1 from Homo sapiens (Human).